A 232-amino-acid chain; its full sequence is Triggering receptor expressed on myeloid cells 1 (232 aa).

Positions 1–20 (MRKAGVWGLLWMLFIEEIQA) are cleaved as a signal peptide. Residues 21 to 125 (AAEVFEEKCT…DPIILFHPVR (105 aa)) form the Ig-like V-type domain. Residues 21 to 203 (AAEVFEEKCT…THVNRAPGIS (183 aa)) are Extracellular-facing. A disulfide bridge links C41 with C109. Positions 152–186 (PLPVTTKLRPRPRPRPKPVTQPIPTSADRLSSPGF) are disordered. N-linked (GlcNAc...) asparagine glycosylation occurs at N192. Residues 204 to 224 (IIIPAACGLLSKTLVFIGLFA) traverse the membrane as a helical segment. At 225-232 (VTHRSFAS) the chain is on the cytoplasmic side.

Monomer. Homomultimer; when activated. Interacts with TYROBP/DAP12. Interacts with TLR4. As to expression, detected in bone marrow, tongue, lung, liver, thymus, spleen, jejunum, ileum and lymph nodes.

The protein localises to the cell membrane. Functionally, cell surface receptor that plays important roles in innate and adaptive immunity by amplifying inflammatory responses. Upon activation by various ligands such as PGLYRP1, HMGB1 or HSP70, multimerizes and forms a complex with transmembrane adapter TYROBP/DAP12. In turn, initiates a SYK-mediated cascade of tyrosine phosphorylation, activating multiple downstream mediators such as BTK, MAPK1, MAPK3 or phospholipase C-gamma. This cascade promotes the neutrophil- and macrophage-mediated release of pro-inflammatory cytokines and/or chemokines, as well as their migration and thereby amplifies inflammatory responses that are triggered by bacterial and fungal infections. By also promoting the amplification of inflammatory signals that are initially triggered by Toll-like receptor (TLR) and NOD-like receptor engagement, plays a major role in the pathophysiology of acute and chronic inflammatory diseases of different etiologies including septic shock and atherosclerosis. This is Triggering receptor expressed on myeloid cells 1 (TREM1) from Bos taurus (Bovine).